A 111-amino-acid chain; its full sequence is ASFDEAPPGNSKAGEKIFKTKCAQCHTVDKGAGHKQGPNLNGLFGRQSGTTAGYSYSAANKNKAVEWEEKTLYDYLLNPKKYIPGTKMVFPGLKKPQDRADLIAYLKEATA.

Position 1 is an N-acetylalanine (alanine 1). Heme c contacts are provided by cysteine 22, cysteine 25, and histidine 26. Lysine 80 bears the N6,N6,N6-trimethyllysine mark. A heme c-binding site is contributed by methionine 88. At lysine 94 the chain carries N6,N6,N6-trimethyllysine.

Belongs to the cytochrome c family. In terms of processing, binds 1 heme c group covalently per subunit.

It localises to the mitochondrion intermembrane space. In terms of biological role, electron carrier protein. The oxidized form of the cytochrome c heme group can accept an electron from the heme group of the cytochrome c1 subunit of cytochrome reductase. Cytochrome c then transfers this electron to the cytochrome oxidase complex, the final protein carrier in the mitochondrial electron-transport chain. This Brassica napus (Rape) protein is Cytochrome c.